Here is a 216-residue protein sequence, read N- to C-terminus: Eukaryotic translation initiation factor 3 subunit K (216 aa).

The PCI domain maps to 40 to 202 (YDLDANLAVL…HIKSKNIAEK (163 aa)).

Belongs to the eIF-3 subunit K family. As to quaternary structure, component of the eukaryotic translation initiation factor 3 (eIF-3) complex.

The protein localises to the cytoplasm. In terms of biological role, component of the eukaryotic translation initiation factor 3 (eIF-3) complex, which is involved in protein synthesis of a specialized repertoire of mRNAs and, together with other initiation factors, stimulates binding of mRNA and methionyl-tRNAi to the 40S ribosome. The eIF-3 complex specifically targets and initiates translation of a subset of mRNAs involved in cell proliferation. The chain is Eukaryotic translation initiation factor 3 subunit K from Nematostella vectensis (Starlet sea anemone).